The sequence spans 858 residues: Elongation factor 2 (858 aa).

The 346-residue stretch at 17 to 362 (ANIRNMSVIA…MITIHLPSPV (346 aa)) folds into the tr-type G domain. 26-33 (AHVDHGKS) serves as a coordination point for GTP. At T54 the chain carries Phosphothreonine. T57 bears the Phosphothreonine; by EEF2K mark. T59 is subject to Phosphothreonine. K152 bears the N6-succinyllysine mark. Residues 158–161 (NKMD) and 216–218 (SGL) contribute to the GTP site. K235 is modified (N6-acetyllysine). N6-acetyllysine; alternate is present on K239. A Glycyl lysine isopeptide (Lys-Gly) (interchain with G-Cter in SUMO1); alternate cross-link involves residue K239. At Y265 the chain carries Phosphotyrosine; by CSK. The residue at position 272 (K272) is an N6-acetyllysine; alternate. K272 is subject to N6-succinyllysine; alternate. An N6-acetyllysine modification is found at K275. K322 is covalently cross-linked (Glycyl lysine isopeptide (Lys-Gly) (interchain with G-Cter in SUMO)). S325 is modified (phosphoserine). Y373 bears the Phosphotyrosine; by CSK mark. T435 bears the Phosphothreonine mark. 2 positions are modified to N6-acetyllysine: K439 and K445. Position 502 is a phosphoserine (S502). K525 is modified (N6,N6,N6-trimethyllysine; by EEF2KMT). A Glycyl lysine isopeptide (Lys-Gly) (interchain with G-Cter in SUMO) cross-link involves residue K529. K572 is modified (N6-succinyllysine). At S595 the chain carries Phosphoserine; by CDK2. K619 is subject to N6-acetyllysine. H715 bears the Diphthamide mark.

It belongs to the TRAFAC class translation factor GTPase superfamily. Classic translation factor GTPase family. EF-G/EF-2 subfamily. In terms of assembly, binds to 80S ribosomes. Actively translating ribosomes show mutually exclusive binding of eIF5a (EIF5A or EIF5A2) and EEF2/eEF2. Interacts with SERBP1; interaction sequesters EEF2/eEF2 at the A-site of the ribosome, thereby blocking the interaction sites of the mRNA-tRNA complex, promoting ribosome stabilization and hibernation. Interacts with HABP4; interaction takes place at the A-site of hibernating ribosomes and promotes ribosome stabilization. Component of the mRNA surveillance SURF complex, at least composed of ERF1, ERF3 (ERF3A or ERF3B), EEF2, UPF1/RENT1, SMG1, SMG8 and SMG9. Interacts with RBPMS2. In terms of processing, phosphorylation by EF-2 kinase completely inactivates EF-2; it requires prior phosphorylation by CDK2 at Ser-595 during mitotic prometaphase. Phosphorylation by CSK promotes SUMOylation, proteolytic cleavage, and nuclear translocation if the C-terminal fragment. Diphthamide is 2-[3-carboxyamido-3-(trimethyl-ammonio)propyl]histidine. Post-translationally, ISGylated. In terms of processing, proteolytically processed at two sites following phosphorylation by CSK. SUMOylated following phosphorylation by CSK, promotes proteolytic cleavage.

It is found in the cytoplasm. It localises to the nucleus. It carries out the reaction GTP + H2O = GDP + phosphate + H(+). Catalyzes the GTP-dependent ribosomal translocation step during translation elongation. During this step, the ribosome changes from the pre-translocational (PRE) to the post-translocational (POST) state as the newly formed A-site-bound peptidyl-tRNA and P-site-bound deacylated tRNA move to the P and E sites, respectively. Catalyzes the coordinated movement of the two tRNA molecules, the mRNA and conformational changes in the ribosome. The chain is Elongation factor 2 (EEF2) from Callithrix jacchus (White-tufted-ear marmoset).